The following is a 298-amino-acid chain: Acetylglutamate kinase (298 aa).

Substrate is bound by residues 69–70, R91, and N196; that span reads GG.

It belongs to the acetylglutamate kinase family. ArgB subfamily.

The protein resides in the cytoplasm. It catalyses the reaction N-acetyl-L-glutamate + ATP = N-acetyl-L-glutamyl 5-phosphate + ADP. Its pathway is amino-acid biosynthesis; L-arginine biosynthesis; N(2)-acetyl-L-ornithine from L-glutamate: step 2/4. Catalyzes the ATP-dependent phosphorylation of N-acetyl-L-glutamate. The protein is Acetylglutamate kinase of Rhodopseudomonas palustris (strain ATCC BAA-98 / CGA009).